The sequence spans 158 residues: NAD(P)H-quinone oxidoreductase subunit J, chloroplastic (158 aa).

This sequence belongs to the complex I 30 kDa subunit family. As to quaternary structure, NDH is composed of at least 16 different subunits, 5 of which are encoded in the nucleus.

The protein localises to the plastid. It localises to the chloroplast thylakoid membrane. It carries out the reaction a plastoquinone + NADH + (n+1) H(+)(in) = a plastoquinol + NAD(+) + n H(+)(out). The catalysed reaction is a plastoquinone + NADPH + (n+1) H(+)(in) = a plastoquinol + NADP(+) + n H(+)(out). In terms of biological role, NDH shuttles electrons from NAD(P)H:plastoquinone, via FMN and iron-sulfur (Fe-S) centers, to quinones in the photosynthetic chain and possibly in a chloroplast respiratory chain. The immediate electron acceptor for the enzyme in this species is believed to be plastoquinone. Couples the redox reaction to proton translocation, and thus conserves the redox energy in a proton gradient. This chain is NAD(P)H-quinone oxidoreductase subunit J, chloroplastic, found in Illicium oligandrum (Star anise).